The primary structure comprises 321 residues: Ribosomal RNA small subunit methyltransferase H (321 aa).

S-adenosyl-L-methionine is bound by residues 29 to 31 (GGH), aspartate 48, tyrosine 76, aspartate 97, and glutamine 104. The segment at 277–321 (LTRGAEPASETEKAENPRAASVRLRAVERTAPNPDHTRKPTGGAS) is disordered.

Belongs to the methyltransferase superfamily. RsmH family.

The protein resides in the cytoplasm. It carries out the reaction cytidine(1402) in 16S rRNA + S-adenosyl-L-methionine = N(4)-methylcytidine(1402) in 16S rRNA + S-adenosyl-L-homocysteine + H(+). Specifically methylates the N4 position of cytidine in position 1402 (C1402) of 16S rRNA. The polypeptide is Ribosomal RNA small subunit methyltransferase H (Frankia casuarinae (strain DSM 45818 / CECT 9043 / HFP020203 / CcI3)).